We begin with the raw amino-acid sequence, 271 residues long: Vacuolar arginine/histidine antiporter stm1 (271 aa).

The 67-residue stretch at 14-80 (LTELSSFLGA…GNVSSTVLVL (67 aa)) folds into the PQ-loop 1 domain. 3 helical membrane-spanning segments follow: residues 17 to 37 (LSSFLGALSLGCWVVLLIPQL), 49 to 69 (ISDLFLIIWLIGDFFNVLGSI), and 77 to 97 (VLVLSFYYIVSDSTLLMQIYY). Ser-119 carries the post-translational modification Phosphoserine. 4 helical membrane passes run 144 to 164 (FGVMGCVVIVSTIVGNLIISS), 178 to 198 (PFTAGCISSVLYFCARIPQII), 211 to 231 (IIFFVLASVGNTSYAFSILVF), and 245 to 265 (PWILGAFSTIFLDIYIFYQFI). One can recognise a PQ-loop 2 domain in the interval 185–239 (SSVLYFCARIPQIIKNHKAKSTEGLSIIFFVLASVGNTSYAFSILVFPASDYLNY).

Belongs to the laat-1 family.

It is found in the vacuole membrane. It catalyses the reaction L-histidine(out) + L-arginine(in) = L-histidine(in) + L-arginine(out). Its function is as follows. Amino acid transporter that moves basic amino acids across the vacuolar membrane. Appears to function as an arginine/histidine antiporter. The chain is Vacuolar arginine/histidine antiporter stm1 (stm1) from Schizosaccharomyces pombe (strain 972 / ATCC 24843) (Fission yeast).